The sequence spans 325 residues: tRNA dimethylallyltransferase (325 aa).

17–24 (GPTASGKT) serves as a coordination point for ATP. A substrate-binding site is contributed by 19-24 (TASGKT). Interaction with substrate tRNA regions lie at residues 42–45 (DSAL), 166–170 (QRIQR), 251–256 (RCVGYR), and 284–291 (KRQITWLR).

It belongs to the IPP transferase family. Monomer. Mg(2+) serves as cofactor.

The catalysed reaction is adenosine(37) in tRNA + dimethylallyl diphosphate = N(6)-dimethylallyladenosine(37) in tRNA + diphosphate. Catalyzes the transfer of a dimethylallyl group onto the adenine at position 37 in tRNAs that read codons beginning with uridine, leading to the formation of N6-(dimethylallyl)adenosine (i(6)A). The protein is tRNA dimethylallyltransferase of Burkholderia multivorans (strain ATCC 17616 / 249).